The following is a 610-amino-acid chain: DNA mismatch repair protein MutL (610 aa).

The protein belongs to the DNA mismatch repair MutL/HexB family.

Functionally, this protein is involved in the repair of mismatches in DNA. It is required for dam-dependent methyl-directed DNA mismatch repair. May act as a 'molecular matchmaker', a protein that promotes the formation of a stable complex between two or more DNA-binding proteins in an ATP-dependent manner without itself being part of a final effector complex. This is DNA mismatch repair protein MutL from Rickettsia canadensis (strain McKiel).